A 447-amino-acid chain; its full sequence is Elongation factor 1-alpha (447 aa).

One can recognise a tr-type G domain in the interval 5–230 (KVHINIVVIG…DNINEPKRPS (226 aa)). The interval 14–21 (GHVDSGKS) is G1. 14–21 (GHVDSGKS) contacts GTP. An N6,N6-dimethyllysine modification is found at Lys55. The interval 70–74 (GITID) is G2. Residue Lys79 is modified to N6,N6,N6-trimethyllysine. The segment at 91–94 (DAPG) is G3. GTP is bound by residues 91–95 (DAPGH) and 153–156 (NKMD). The G4 stretch occupies residues 153–156 (NKMD). An N6,N6,N6-trimethyllysine modification is found at Lys187. The G5 stretch occupies residues 194–196 (SGF). The residue at position 261 (Lys261) is an N6-methyllysine. Glu289 is subject to 5-glutamyl glycerylphosphorylethanolamine. An N6,N6,N6-trimethyllysine modification is found at Lys306. At Glu362 the chain carries 5-glutamyl glycerylphosphorylethanolamine. The residue at position 396 (Lys396) is an N6,N6,N6-trimethyllysine.

Belongs to the TRAFAC class translation factor GTPase superfamily. Classic translation factor GTPase family. EF-Tu/EF-1A subfamily.

The protein localises to the cytoplasm. This protein promotes the GTP-dependent binding of aminoacyl-tRNA to the A-site of ribosomes during protein biosynthesis. The chain is Elongation factor 1-alpha from Vicia faba (Broad bean).